A 320-amino-acid chain; its full sequence is Phosphate acetyltransferase (320 aa).

It belongs to the phosphate acetyltransferase and butyryltransferase family.

Its subcellular location is the cytoplasm. The catalysed reaction is acetyl-CoA + phosphate = acetyl phosphate + CoA. It participates in metabolic intermediate biosynthesis; acetyl-CoA biosynthesis; acetyl-CoA from acetate: step 2/2. In Mycoplasma genitalium (strain ATCC 33530 / DSM 19775 / NCTC 10195 / G37) (Mycoplasmoides genitalium), this protein is Phosphate acetyltransferase (pta).